Here is a 175-residue protein sequence, read N- to C-terminus: Protein CENTRORADIALIS-like (175 aa).

This sequence belongs to the phosphatidylethanolamine-binding protein family. In terms of tissue distribution, expressed in tissues surrounding vascular bundles in hypocotyl of 2-week-old plants.

It localises to the cytoplasm. Functionally, may form complexes with phosphorylated ligands by interfering with kinases and their effectors. Can substitute for TERMINAL FLOWER 1 (in vitro). The protein is Protein CENTRORADIALIS-like (CEN) of Arabidopsis thaliana (Mouse-ear cress).